The chain runs to 215 residues: Small ribosomal subunit protein uS3 (215 aa).

One can recognise a KH type-2 domain in the interval 38 to 107; sequence IRDYIKKTYH…KFQLNIEEVK (70 aa).

This sequence belongs to the universal ribosomal protein uS3 family. As to quaternary structure, part of the 30S ribosomal subunit. Forms a tight complex with proteins S10 and S14.

Functionally, binds the lower part of the 30S subunit head. Binds mRNA in the 70S ribosome, positioning it for translation. The polypeptide is Small ribosomal subunit protein uS3 (Kosmotoga olearia (strain ATCC BAA-1733 / DSM 21960 / TBF 19.5.1)).